The chain runs to 343 residues: Holliday junction branch migration complex subunit RuvB (343 aa).

The segment at 4–184 (SDRLISAKAG…FGIVQRLEFY (181 aa)) is large ATPase domain (RuvB-L). Residues Ile-23, Arg-24, Gly-65, Lys-68, Thr-69, Thr-70, 131–133 (EDY), Arg-174, Tyr-184, and Arg-221 contribute to the ATP site. A Mg(2+)-binding site is contributed by Thr-69. A small ATPAse domain (RuvB-S) region spans residues 185-255 (NHQDLTHIIT…IADQALNMLK (71 aa)). The head domain (RuvB-H) stretch occupies residues 258-343 (SQGFDHMDRR…RSGREDDLFE (86 aa)). DNA is bound by residues Arg-294, Arg-313, and Arg-318.

The protein belongs to the RuvB family. In terms of assembly, homohexamer. Forms an RuvA(8)-RuvB(12)-Holliday junction (HJ) complex. HJ DNA is sandwiched between 2 RuvA tetramers; dsDNA enters through RuvA and exits via RuvB. An RuvB hexamer assembles on each DNA strand where it exits the tetramer. Each RuvB hexamer is contacted by two RuvA subunits (via domain III) on 2 adjacent RuvB subunits; this complex drives branch migration. In the full resolvosome a probable DNA-RuvA(4)-RuvB(12)-RuvC(2) complex forms which resolves the HJ.

Its subcellular location is the cytoplasm. The enzyme catalyses ATP + H2O = ADP + phosphate + H(+). The RuvA-RuvB-RuvC complex processes Holliday junction (HJ) DNA during genetic recombination and DNA repair, while the RuvA-RuvB complex plays an important role in the rescue of blocked DNA replication forks via replication fork reversal (RFR). RuvA specifically binds to HJ cruciform DNA, conferring on it an open structure. The RuvB hexamer acts as an ATP-dependent pump, pulling dsDNA into and through the RuvAB complex. RuvB forms 2 homohexamers on either side of HJ DNA bound by 1 or 2 RuvA tetramers; 4 subunits per hexamer contact DNA at a time. Coordinated motions by a converter formed by DNA-disengaged RuvB subunits stimulates ATP hydrolysis and nucleotide exchange. Immobilization of the converter enables RuvB to convert the ATP-contained energy into a lever motion, pulling 2 nucleotides of DNA out of the RuvA tetramer per ATP hydrolyzed, thus driving DNA branch migration. The RuvB motors rotate together with the DNA substrate, which together with the progressing nucleotide cycle form the mechanistic basis for DNA recombination by continuous HJ branch migration. Branch migration allows RuvC to scan DNA until it finds its consensus sequence, where it cleaves and resolves cruciform DNA. This chain is Holliday junction branch migration complex subunit RuvB, found in Marinobacter nauticus (strain ATCC 700491 / DSM 11845 / VT8) (Marinobacter aquaeolei).